Reading from the N-terminus, the 1000-residue chain is Probable coatomer subunit beta' (1000 aa).

7 WD repeats span residues 13–52 (ARSD…LVKS), 55–94 (VCDV…RVHQ), 97–136 (AHSD…AMKQ), 140–180 (GHTH…PNFT), 183–224 (GHEK…CVQT), 227–266 (GHAQ…LETT), and 351–391 (LGSS…NKDF). A disordered region spans residues 863 to 1000 (PRQTETQLKA…MDDLNLDEED (138 aa)). Positions 901 to 915 (EPEEEEEQEEFDDDQ) are enriched in acidic residues. Residues 960 to 969 (SASSQQSAQD) are compositionally biased toward low complexity. The span at 970–1000 (FQDDTQWSDEDFGDAENGDLNMDDLNLDEED) shows a compositional bias: acidic residues.

This sequence belongs to the WD repeat COPB2 family. In terms of assembly, oligomeric complex that consists of at least the alpha, beta, beta', gamma, delta, epsilon and zeta subunits.

The protein resides in the cytoplasm. Its subcellular location is the golgi apparatus membrane. The protein localises to the cytoplasmic vesicle. It is found in the COPI-coated vesicle membrane. In terms of biological role, the coatomer is a cytosolic protein complex that binds to dilysine motifs and reversibly associates with Golgi non-clathrin-coated vesicles, which further mediate biosynthetic protein transport from the ER, via the Golgi up to the trans Golgi network. Coatomer complex is required for budding from Golgi membranes, and is essential for the retrograde Golgi-to-ER transport of dilysine-tagged proteins. This is Probable coatomer subunit beta' (copb-2) from Caenorhabditis elegans.